The sequence spans 481 residues: tRNA sulfurtransferase (481 aa).

Residues 54–156 (ADGDGPLRHI…GKDVFFYHEI (103 aa)) enclose the THUMP domain. ATP is bound by residues 174 to 175 (LV), lysine 256, glycine 278, and glutamine 287. Cysteine 334 and cysteine 433 form a disulfide bridge. The region spanning 388–463 (IPKDAVIIDL…YYSTFSDLKK (76 aa)) is the Rhodanese domain. Cysteine 433 acts as the Cysteine persulfide intermediate in catalysis.

Belongs to the ThiI family.

The protein localises to the cytoplasm. It carries out the reaction [ThiI sulfur-carrier protein]-S-sulfanyl-L-cysteine + a uridine in tRNA + 2 reduced [2Fe-2S]-[ferredoxin] + ATP + H(+) = [ThiI sulfur-carrier protein]-L-cysteine + a 4-thiouridine in tRNA + 2 oxidized [2Fe-2S]-[ferredoxin] + AMP + diphosphate. It catalyses the reaction [ThiS sulfur-carrier protein]-C-terminal Gly-Gly-AMP + S-sulfanyl-L-cysteinyl-[cysteine desulfurase] + AH2 = [ThiS sulfur-carrier protein]-C-terminal-Gly-aminoethanethioate + L-cysteinyl-[cysteine desulfurase] + A + AMP + 2 H(+). The protein operates within cofactor biosynthesis; thiamine diphosphate biosynthesis. Its function is as follows. Catalyzes the ATP-dependent transfer of a sulfur to tRNA to produce 4-thiouridine in position 8 of tRNAs, which functions as a near-UV photosensor. Also catalyzes the transfer of sulfur to the sulfur carrier protein ThiS, forming ThiS-thiocarboxylate. This is a step in the synthesis of thiazole, in the thiamine biosynthesis pathway. The sulfur is donated as persulfide by IscS. This chain is tRNA sulfurtransferase, found in Thermoplasma acidophilum (strain ATCC 25905 / DSM 1728 / JCM 9062 / NBRC 15155 / AMRC-C165).